Reading from the N-terminus, the 147-residue chain is D-aminoacyl-tRNA deacylase (147 aa).

Residues 136 to 137 (GP) carry the Gly-cisPro motif, important for rejection of L-amino acids motif.

This sequence belongs to the DTD family. As to quaternary structure, homodimer.

It is found in the cytoplasm. It carries out the reaction glycyl-tRNA(Ala) + H2O = tRNA(Ala) + glycine + H(+). It catalyses the reaction a D-aminoacyl-tRNA + H2O = a tRNA + a D-alpha-amino acid + H(+). An aminoacyl-tRNA editing enzyme that deacylates mischarged D-aminoacyl-tRNAs. Also deacylates mischarged glycyl-tRNA(Ala), protecting cells against glycine mischarging by AlaRS. Acts via tRNA-based rather than protein-based catalysis; rejects L-amino acids rather than detecting D-amino acids in the active site. By recycling D-aminoacyl-tRNA to D-amino acids and free tRNA molecules, this enzyme counteracts the toxicity associated with the formation of D-aminoacyl-tRNA entities in vivo and helps enforce protein L-homochirality. This is D-aminoacyl-tRNA deacylase from Streptococcus pyogenes serotype M6 (strain ATCC BAA-946 / MGAS10394).